The sequence spans 357 residues: Histidine biosynthesis bifunctional protein HisB (357 aa).

A histidinol-phosphatase region spans residues 1-168 (MSEKVLFIDR…IVFKLTKKHD (168 aa)). Asp-9 functions as the Nucleophile in the catalytic mechanism. 2 residues coordinate Mg(2+): Asp-9 and Asp-11. Residue Asp-11 is the Proton donor of the active site. Positions 93, 95, 101, and 103 each coordinate Zn(2+). Asp-130 contributes to the Mg(2+) binding site. Residues 169-357 (RHAKVVRNTK…KNLPSSKGLL (189 aa)) are imidazoleglycerol-phosphate dehydratase.

The protein in the N-terminal section; belongs to the histidinol-phosphatase family. In the C-terminal section; belongs to the imidazoleglycerol-phosphate dehydratase family. The cofactor is Mg(2+). It depends on Zn(2+) as a cofactor.

Its subcellular location is the cytoplasm. It carries out the reaction D-erythro-1-(imidazol-4-yl)glycerol 3-phosphate = 3-(imidazol-4-yl)-2-oxopropyl phosphate + H2O. It catalyses the reaction L-histidinol phosphate + H2O = L-histidinol + phosphate. It functions in the pathway amino-acid biosynthesis; L-histidine biosynthesis; L-histidine from 5-phospho-alpha-D-ribose 1-diphosphate: step 6/9. It participates in amino-acid biosynthesis; L-histidine biosynthesis; L-histidine from 5-phospho-alpha-D-ribose 1-diphosphate: step 8/9. In Buchnera aphidicola subsp. Baizongia pistaciae (strain Bp), this protein is Histidine biosynthesis bifunctional protein HisB.